We begin with the raw amino-acid sequence, 711 residues long: MGAYLTLIYGVIVIAALVIIGLIKFIFAQDKGNEKMQQISDAIKEGAMAFLNRQYKTIASLALIVAVIIVVANYYGHLSEGSSQALSFALHVGFAFITGAFCSALSGYIGMYMAVNSNIRAAAGARSGLNRALQIALKGGAVTGLAVTALSLFGVATLFLAYGGLSGQDELIKEAPSLIVGFGFGASFVALFAQLGGGIYTKAADVGADLVGKVEAGIPEDDPRNPAVIADLVGDNVGDCAGRGADLFESTAAENIGAMILGVGLYPIFGWKGILFPLVARAIGIIASIIGIFFVNTKDESKDPMIALNKGYFVTTVVNLIALFFAVKVMLSGHLPDGRPVNYLLLYGAVVTGVILSYIFVFLTDYYTSVNKRPVQEIAKASTTGAATNIITGTSVGMESTALPVIFISAAIYIAYKLGEMAIPHIGTAGLYGTAIATMGMLSTTAYILAMDTFGPITDNAGGITEMSGAPEEIRRVTDRLDACGNTTKALTKGYAIGSAALATFLLFSAYLDEVKKILGKPIDSWFPVDIGKPEVFIGAFIGAMIVYLFSSTAIRAVGKAAQYVILEVRRQFREIPGIMEGTAKPDYARAVDIVTKGALKEMVIPGLIVVVTPILVGVILGKEAAAAFLMIGTISGVILALYLNNGGGAWDNAKKFIELGNYGGKGSDAHKASVVGDTVGDPFKDTAGPSLHVLIKLISTITLVFVALFR.

A run of 5 helical transmembrane segments spans residues 7-27 (LIYG…KFIF), 58-78 (IASL…YGHL), 85-105 (ALSF…CSAL), 145-165 (LAVT…YGGL), and 179-199 (IVGF…GGGI). K202 is a substrate binding site. Residues D205, D209, and D235 each contribute to the Mg(2+) site. The next 6 membrane-spanning stretches (helical) occupy residues 251-271 (TAAE…IFGW), 274-294 (ILFP…GIFF), 311-331 (GYFV…KVML), 343-363 (YLLL…FVFL), 403-423 (LPVI…EMAI), and 431-451 (LYGT…ILAM). A Mg(2+)-binding site is contributed by D459. Transmembrane regions (helical) follow at residues 495–515 (YAIG…LDEV), 535–555 (EVFI…STAI), 602–622 (EMVI…VILG), and 624–644 (EAAA…ALYL). Ca(2+) contacts are provided by D652, D678, and D682. K685 contributes to the substrate binding site. The helical transmembrane segment at 690-710 (PSLHVLIKLISTITLVFVALF) threads the bilayer.

This sequence belongs to the H(+)-translocating pyrophosphatase (TC 3.A.10) family. K(+)-insensitive subfamily. As to quaternary structure, homodimer. Mg(2+) serves as cofactor.

It localises to the cell membrane. The enzyme catalyses diphosphate + H2O + H(+)(in) = 2 phosphate + 2 H(+)(out). In terms of biological role, proton pump that utilizes the energy of pyrophosphate hydrolysis as the driving force for proton movement across the membrane. Generates a proton motive force. This chain is K(+)-insensitive pyrophosphate-energized proton pump, found in Caldanaerobacter subterraneus subsp. tengcongensis (strain DSM 15242 / JCM 11007 / NBRC 100824 / MB4) (Thermoanaerobacter tengcongensis).